We begin with the raw amino-acid sequence, 350 residues long: Probable nicotinate-nucleotide adenylyltransferase/Ap4A hydrolase (350 aa).

The segment at 1-187 (MKQKIIIFGG…YINTNHLYLI (187 aa)) is naMN adenylyltransferase. An ap4A hydrolase region spans residues 196–350 (DKRFQHCLRV…LKYVQNLVKD (155 aa)). The HD domain maps to 198 to 310 (RFQHCLRVGK…VYLADKLEPN (113 aa)). H201 provides a ligand contact to ADP. Residues H201, H230, and D231 each contribute to the Fe cation site. Residues 231–234 (DLAK), H261, 287–288 (HT), D305, and R311 contribute to the ADP site. D305 serves as a coordination point for Fe cation.

It in the N-terminal section; belongs to the NadD family. This sequence in the C-terminal section; belongs to the Ap4A hydrolase YqeK family.

It catalyses the reaction nicotinate beta-D-ribonucleotide + ATP + H(+) = deamido-NAD(+) + diphosphate. It carries out the reaction P(1),P(4)-bis(5'-adenosyl) tetraphosphate + H2O = 2 ADP + 2 H(+). It participates in cofactor biosynthesis; NAD(+) biosynthesis; deamido-NAD(+) from nicotinate D-ribonucleotide: step 1/1. In terms of biological role, catalyzes the reversible adenylation of nicotinate mononucleotide (NaMN) to nicotinic acid adenine dinucleotide (NaAD). Its function is as follows. Hydrolyzes diadenosine 5',5'''-P1,P4-tetraphosphate (Ap4A) to yield ADP. This Mycoplasma genitalium (strain ATCC 33530 / DSM 19775 / NCTC 10195 / G37) (Mycoplasmoides genitalium) protein is Probable nicotinate-nucleotide adenylyltransferase/Ap4A hydrolase.